We begin with the raw amino-acid sequence, 377 residues long: Anhydro-N-acetylmuramic acid kinase (377 aa).

An ATP-binding site is contributed by 18–25; that stretch reads GTSADGID.

The protein belongs to the anhydro-N-acetylmuramic acid kinase family.

It catalyses the reaction 1,6-anhydro-N-acetyl-beta-muramate + ATP + H2O = N-acetyl-D-muramate 6-phosphate + ADP + H(+). It participates in amino-sugar metabolism; 1,6-anhydro-N-acetylmuramate degradation. It functions in the pathway cell wall biogenesis; peptidoglycan recycling. Catalyzes the specific phosphorylation of 1,6-anhydro-N-acetylmuramic acid (anhMurNAc) with the simultaneous cleavage of the 1,6-anhydro ring, generating MurNAc-6-P. Is required for the utilization of anhMurNAc either imported from the medium or derived from its own cell wall murein, and thus plays a role in cell wall recycling. In Xanthomonas campestris pv. campestris (strain 8004), this protein is Anhydro-N-acetylmuramic acid kinase.